A 234-amino-acid chain; its full sequence is MKNMLLMSGSKYKDTAYLVHTLPWLAQFLADYKGKKVAFVPYAGVRRSFDEYETAVKNALQSLELEIVSVHRGKQHRDIIEQADVIAIGGGNTFCLLKQMYEHDLLDAIRAKVNSGTPYFGWSAGANVAGSSIMTTNDMPITYPPSFNALNLFPHQINPHFISGKMQGHNGESREERLEEFLIVNPQSLVYAMPEGTALHIQGEQATVLGAQDILCFSEKMQLDTKAVNSTFNY.

Catalysis depends on charge relay system residues Ser123, Asp138, and His160.

The protein belongs to the peptidase S51 family.

It localises to the cytoplasm. It carries out the reaction Dipeptidase E catalyzes the hydrolysis of dipeptides Asp-|-Xaa. It does not act on peptides with N-terminal Glu, Asn or Gln, nor does it cleave isoaspartyl peptides.. In terms of biological role, hydrolyzes dipeptides containing N-terminal aspartate residues. May play a role in allowing the cell to use peptide aspartate to spare carbon otherwise required for the synthesis of the aspartate family of amino acids. This chain is Peptidase E, found in Actinobacillus pleuropneumoniae serotype 3 (strain JL03).